The primary structure comprises 1040 residues: Probable starch synthase 4, chloroplastic/amyloplastic (1040 aa).

The N-terminal 42 residues, 1–42, are a transit peptide targeting the chloroplast; that stretch reads MTTKLSSFCFLTHGLAGISCEREHGSSRRFFYLPSRRLVSTS. The disordered stretch occupies residues 43-142; that stretch reads CKMRQQRGFD…KSKTAKKKGE (100 aa). Composition is skewed to basic and acidic residues over residues 52–61 and 112–124; these read DSSKRQEVKK and NHADENLEKKDDI. Residues 187–466 are a coiled coil; it reads ELMTMIRSAE…EESKKKSRDE (280 aa). ADP contacts are provided by lysine 556, glycine 559, and aspartate 562. Tryptophan 679 and glutamine 680 together coordinate (1,4-alpha-D-glucosyl)n. ADP-binding residues include arginine 849, lysine 854, lysine 906, aspartate 908, tyrosine 916, leucine 933, and threonine 934.

It belongs to the glycosyltransferase 1 family. Bacterial/plant glycogen synthase subfamily. As to quaternary structure, interacts with PTST2. Interacts with PII1; the interaction is essential for the initiation of starch granules biosynthesis in leaf chloroplasts. In terms of tissue distribution, expressed in leaves and flowers.

It is found in the plastid. It localises to the chloroplast. The protein localises to the amyloplast. Its subcellular location is the chloroplast stroma. The enzyme catalyses [(1-&gt;4)-alpha-D-glucosyl](n) + ADP-alpha-D-glucose = [(1-&gt;4)-alpha-D-glucosyl](n+1) + ADP + H(+). Its pathway is glycan biosynthesis; starch biosynthesis. In terms of biological role, probably involved in the priming of starch granule formation. May play a regulatory role in the control of starch accumulation in plastids. Is necessary and sufficient to establish the correct number of starch granules observed in chloroplasts. The polypeptide is Probable starch synthase 4, chloroplastic/amyloplastic (Arabidopsis thaliana (Mouse-ear cress)).